The primary structure comprises 131 residues: D-ribose pyranase (131 aa).

Catalysis depends on histidine 20, which acts as the Proton donor. Residues aspartate 28, histidine 98, and 120-122 (YAN) contribute to the substrate site.

The protein belongs to the RbsD / FucU family. RbsD subfamily. As to quaternary structure, homodecamer.

The protein localises to the cytoplasm. It carries out the reaction beta-D-ribopyranose = beta-D-ribofuranose. Its pathway is carbohydrate metabolism; D-ribose degradation; D-ribose 5-phosphate from beta-D-ribopyranose: step 1/2. Its function is as follows. Catalyzes the interconversion of beta-pyran and beta-furan forms of D-ribose. The chain is D-ribose pyranase from Clostridium perfringens (strain ATCC 13124 / DSM 756 / JCM 1290 / NCIMB 6125 / NCTC 8237 / Type A).